Consider the following 118-residue polypeptide: Aspartate 1-decarboxylase (118 aa).

The active-site Schiff-base intermediate with substrate; via pyruvic acid is the S25. A Pyruvic acid (Ser) modification is found at S25. T57 lines the substrate pocket. Y58 functions as the Proton donor in the catalytic mechanism. 73-75 (GAA) lines the substrate pocket.

This sequence belongs to the PanD family. As to quaternary structure, heterooctamer of four alpha and four beta subunits. The cofactor is pyruvate. Post-translationally, is synthesized initially as an inactive proenzyme, which is activated by self-cleavage at a specific serine bond to produce a beta-subunit with a hydroxyl group at its C-terminus and an alpha-subunit with a pyruvoyl group at its N-terminus.

It is found in the cytoplasm. The enzyme catalyses L-aspartate + H(+) = beta-alanine + CO2. It participates in cofactor biosynthesis; (R)-pantothenate biosynthesis; beta-alanine from L-aspartate: step 1/1. Catalyzes the pyruvoyl-dependent decarboxylation of aspartate to produce beta-alanine. In Phenylobacterium zucineum (strain HLK1), this protein is Aspartate 1-decarboxylase.